The sequence spans 300 residues: Cyclic nucleotide synthase CdnE01 (300 aa).

Aspartate 63, aspartate 65, and aspartate 137 together coordinate Mg(2+).

The protein belongs to the CD-NTase family. E01 subfamily. Mg(2+) is required as a cofactor.

Binds to and probably activated by a virus-derived, approximately 400 nucleotide RNA (called CBASS-activating bacteriophage RNA, cabRNA) that begins in the viral terminase subunit terS and extends into terL, as well as by a shorter RNA with part of the cabRNA sequence able to form a hairpin. RNA secondary and/or tertiary structure, as well as viral infection itself, are important for CdnE activation. In terms of biological role, cyclic nucleotide synthase (second messenger synthase) of a CBASS antivirus system. CBASS (cyclic oligonucleotide-based antiphage signaling system) provides immunity against bacteriophage. The CD-NTase protein synthesizes cyclic nucleotides in response to infection; these serve as specific second messenger signals. The signals activate a diverse range of effectors, leading to bacterial cell death and thus abortive phage infection. A type I-B CBASS system. Functionally, protects S.aureus against phage infection. When the CBASS operon (cdnE and the following gene) is introduced in S.aureus strain RN4220 there is strong protection against lytic DNA phages 80alpha-vir and phi-NM1-gamma-6 but little to no protection against phages phi-NM4-gamma-4 or phi-12-gamma-3. The chain is Cyclic nucleotide synthase CdnE01 from Staphylococcus haemolyticus.